We begin with the raw amino-acid sequence, 398 residues long: Na(+)/H(+) antiporter NhaA (398 aa).

The next 12 membrane-spanning stretches (helical) occupy residues 8–28 (FLQL…LALI), 59–79 (LLLW…GMEI), 96–116 (LPVI…SFII), 124–144 (AGWA…LSLL), 154–174 (VFLL…IALF), 177–197 (AELH…LLML), 202–222 (VMLL…VLKS), 223–243 (GVHA…IRGA), 261–281 (YFIL…GLSW), 292–312 (IIVG…WLAV), 328–348 (LFGL…IGGL), and 362–382 (LGIL…LRNA).

Belongs to the NhaA Na(+)/H(+) (TC 2.A.33) antiporter family.

The protein localises to the cell inner membrane. It catalyses the reaction Na(+)(in) + 2 H(+)(out) = Na(+)(out) + 2 H(+)(in). In terms of biological role, na(+)/H(+) antiporter that extrudes sodium in exchange for external protons. This is Na(+)/H(+) antiporter NhaA from Tolumonas auensis (strain DSM 9187 / NBRC 110442 / TA 4).